The chain runs to 128 residues: Large ribosomal subunit protein bL12 (128 aa).

It belongs to the bacterial ribosomal protein bL12 family. In terms of assembly, homodimer. Part of the ribosomal stalk of the 50S ribosomal subunit. Forms a multimeric L10(L12)X complex, where L10 forms an elongated spine to which 2 to 4 L12 dimers bind in a sequential fashion. Binds GTP-bound translation factors.

Functionally, forms part of the ribosomal stalk which helps the ribosome interact with GTP-bound translation factors. Is thus essential for accurate translation. This is Large ribosomal subunit protein bL12 from Phenylobacterium zucineum (strain HLK1).